The sequence spans 192 residues: dTDP-3-amino-3,6-dideoxy-alpha-D-galactopyranose 3-N-acetyltransferase (192 aa).

Belongs to the transferase hexapeptide repeat family.

The enzyme catalyses dTDP-3-amino-3,6-dideoxy-alpha-D-galactopyranose + acetyl-CoA = dTDP-3-acetamido-3,6-dideoxy-alpha-D-galactopyranose + CoA + H(+). Functionally, catalyzes the transfer of an acetyl group to dTDP-D-Fucp3N to form dTDP-D-Fucp3NAc in the biosynthesis of dTDP-3-acetamido-3,6-dideoxy-alpha-D-galactose, a glycan chain of the S-layer. The protein is dTDP-3-amino-3,6-dideoxy-alpha-D-galactopyranose 3-N-acetyltransferase (fdtC) of Aneurinibacillus thermoaerophilus.